Reading from the N-terminus, the 302-residue chain is Arginase (302 aa).

Residues His-103, Asp-126, His-128, and Asp-130 each coordinate Mn(2+). Residues 128–132 (HGDLN), 139–141 (SGN), and Asp-180 contribute to the substrate site. Mn(2+) is bound by residues Asp-229 and Asp-231. 2 residues coordinate substrate: Thr-243 and Glu-274.

This sequence belongs to the arginase family. Mn(2+) is required as a cofactor.

It catalyses the reaction L-arginine + H2O = urea + L-ornithine. It functions in the pathway nitrogen metabolism; urea cycle; L-ornithine and urea from L-arginine: step 1/1. This is Arginase (arg) from Staphylococcus aureus (strain MSSA476).